The chain runs to 469 residues: Aspartyl/glutamyl-tRNA(Asn/Gln) amidotransferase subunit B (469 aa).

It belongs to the GatB/GatE family. GatB subfamily. As to quaternary structure, heterotrimer of A, B and C subunits.

The catalysed reaction is L-glutamyl-tRNA(Gln) + L-glutamine + ATP + H2O = L-glutaminyl-tRNA(Gln) + L-glutamate + ADP + phosphate + H(+). The enzyme catalyses L-aspartyl-tRNA(Asn) + L-glutamine + ATP + H2O = L-asparaginyl-tRNA(Asn) + L-glutamate + ADP + phosphate + 2 H(+). In terms of biological role, allows the formation of correctly charged Asn-tRNA(Asn) or Gln-tRNA(Gln) through the transamidation of misacylated Asp-tRNA(Asn) or Glu-tRNA(Gln) in organisms which lack either or both of asparaginyl-tRNA or glutaminyl-tRNA synthetases. The reaction takes place in the presence of glutamine and ATP through an activated phospho-Asp-tRNA(Asn) or phospho-Glu-tRNA(Gln). The chain is Aspartyl/glutamyl-tRNA(Asn/Gln) amidotransferase subunit B from Methanococcus aeolicus (strain ATCC BAA-1280 / DSM 17508 / OCM 812 / Nankai-3).